The following is a 262-amino-acid chain: Acyl-[acyl-carrier-protein]--UDP-N-acetylglucosamine O-acyltransferase (262 aa).

The protein belongs to the transferase hexapeptide repeat family. LpxA subfamily. As to quaternary structure, homotrimer.

It is found in the cytoplasm. It catalyses the reaction a (3R)-hydroxyacyl-[ACP] + UDP-N-acetyl-alpha-D-glucosamine = a UDP-3-O-[(3R)-3-hydroxyacyl]-N-acetyl-alpha-D-glucosamine + holo-[ACP]. The protein operates within glycolipid biosynthesis; lipid IV(A) biosynthesis; lipid IV(A) from (3R)-3-hydroxytetradecanoyl-[acyl-carrier-protein] and UDP-N-acetyl-alpha-D-glucosamine: step 1/6. Involved in the biosynthesis of lipid A, a phosphorylated glycolipid that anchors the lipopolysaccharide to the outer membrane of the cell. The sequence is that of Acyl-[acyl-carrier-protein]--UDP-N-acetylglucosamine O-acyltransferase from Sodalis glossinidius (strain morsitans).